Here is a 580-residue protein sequence, read N- to C-terminus: Keratin, type II cytoskeletal 5 (580 aa).

The tract at residues 1 to 161 (MSRQSSVSFR…DPTIQRVRTE (161 aa)) is head. Phosphoserine occurs at positions 5, 8, 16, and 21. Position 24 is a phosphothreonine; by CDK1 (Thr-24). Ser-26, Ser-36, Ser-47, Ser-61, Ser-68, Ser-72, Ser-75, and Ser-79 each carry phosphoserine. Thr-145 bears the Phosphothreonine; by CDK1 mark. At Thr-160 the chain carries Phosphothreonine; by AURKB. The segment at 162–197 (EREQIKTLNNKFASFIDKVRFLEQQNKVLDTKWALL) is coil 1A. The region spanning 162–475 (EREQIKTLNN…KLLEGEECRL (314 aa)) is the IF rod domain. The tract at residues 198–216 (QEQGTKTIKQNLDPLFEQY) is linker 1. Residues 217-309 (INNLRRQLDG…FFDAELSQMQ (93 aa)) are coil 1B. The segment at 310–332 (THVSDTSVVLSMDNNRSLDLDSI) is linker 12. The tract at residues 333 to 471 (IAEVKAQYED…ATYRKLLEGE (139 aa)) is coil 2. The segment at 472-580 (ECRLSGEGVG…TSSSRRSFKS (109 aa)) is tail. An Omega-N-methylarginine modification is found at Arg-526. Positions 555-580 (FGSGGGSGSSVKFVSTTSSSRRSFKS) are disordered. A compositionally biased stretch (low complexity) spans 563 to 580 (SSVKFVSTTSSSRRSFKS).

This sequence belongs to the intermediate filament family. Heterodimer of a type I and a type II keratin. Heterodimer with type I keratin KRT25 leading to the formation of keratin intermediate filament (KIF) network. Forms a heterodimer (via 2B domains) with KRT14 (via 2B domains). Interacts with PLEC isoform 1C, when in a heterodimer with KRT14. Interacts with TCHP. Interacts with EPPK1. Interacts with AMELX. Interacts with PKP1 (via N-terminus) and PKP2. Phosphorylated by CDK1, AURKB and Rho-kinase, phosphorylation is regulated by the cell cycle. Thr-24 phosphorylation, mediated by CDK1, peaks during prometaphase or metaphase cells with phosphorylated filamentous structures evident throughout the cytoplasm during early mitosis. CDK1 phosphorylates Thr-24 in mitotic cells at the site of injury. In terms of processing, O-glycosylated. In terms of tissue distribution, expressed in the corneal epithelium (at protein level). Expressed in the epidermis of the ear (at protein level). Expressed in the basal and spinous layers of the skin at birth (at protein level).

Its subcellular location is the cytoplasm. Functionally, required for the formation of keratin intermediate filaments in the basal epidermis and maintenance of the skin barrier in response to mechanical stress. Regulates the recruitment of Langerhans cells to the epidermis, potentially by modulation of the abundance of macrophage chemotactic cytokines, macrophage inflammatory cytokines and CTNND1 localization in keratinocytes. The sequence is that of Keratin, type II cytoskeletal 5 from Mus musculus (Mouse).